Here is a 124-residue protein sequence, read N- to C-terminus: UPF0235 protein (124 aa).

The segment at 1 to 22 (MTKKGSSNSSKQQQQQQQIIIN) is disordered.

The protein belongs to the UPF0235 family.

The protein is UPF0235 protein of Dictyostelium discoideum (Social amoeba).